We begin with the raw amino-acid sequence, 434 residues long: ATP-dependent protease ATPase subunit HslU (434 aa).

Residues I18, 60–65 (GVGKTE), D247, E312, and R384 contribute to the ATP site.

The protein belongs to the ClpX chaperone family. HslU subfamily. As to quaternary structure, a double ring-shaped homohexamer of HslV is capped on each side by a ring-shaped HslU homohexamer. The assembly of the HslU/HslV complex is dependent on binding of ATP.

The protein resides in the cytoplasm. Functionally, ATPase subunit of a proteasome-like degradation complex; this subunit has chaperone activity. The binding of ATP and its subsequent hydrolysis by HslU are essential for unfolding of protein substrates subsequently hydrolyzed by HslV. HslU recognizes the N-terminal part of its protein substrates and unfolds these before they are guided to HslV for hydrolysis. The chain is ATP-dependent protease ATPase subunit HslU from Brucella abortus (strain S19).